The chain runs to 226 residues: Leucyl/phenylalanyl-tRNA--protein transferase (226 aa).

This sequence belongs to the L/F-transferase family.

The protein resides in the cytoplasm. It catalyses the reaction N-terminal L-lysyl-[protein] + L-leucyl-tRNA(Leu) = N-terminal L-leucyl-L-lysyl-[protein] + tRNA(Leu) + H(+). The enzyme catalyses N-terminal L-arginyl-[protein] + L-leucyl-tRNA(Leu) = N-terminal L-leucyl-L-arginyl-[protein] + tRNA(Leu) + H(+). The catalysed reaction is L-phenylalanyl-tRNA(Phe) + an N-terminal L-alpha-aminoacyl-[protein] = an N-terminal L-phenylalanyl-L-alpha-aminoacyl-[protein] + tRNA(Phe). Functionally, functions in the N-end rule pathway of protein degradation where it conjugates Leu, Phe and, less efficiently, Met from aminoacyl-tRNAs to the N-termini of proteins containing an N-terminal arginine or lysine. In Pseudomonas fluorescens (strain Pf0-1), this protein is Leucyl/phenylalanyl-tRNA--protein transferase.